Reading from the N-terminus, the 329-residue chain is uncharacterized protein (329 aa).

A disordered region spans residues 1–20; it reads MGESTTQPAGGAAVDDETRS.

This is an uncharacterized protein from Mycobacterium tuberculosis (strain CDC 1551 / Oshkosh).